The primary structure comprises 1335 residues: Xanthine dehydrogenase/oxidase (1335 aa).

Residues 7 to 94 form the 2Fe-2S ferredoxin-type domain; it reads DELVFFVNGK…HVAVTTVEGI (88 aa). 8 residues coordinate [2Fe-2S] cluster: Cys46, Cys51, Cys54, Cys76, Cys115, Cys118, Cys150, and Cys152. An FAD-binding PCMH-type domain is found at 231–416; that stretch reads FEGERVTWIQ…VSIVIPYSRK (186 aa). FAD contacts are provided by residues 259–266, Phe339, 349–353, Asp362, Leu406, and Lys424; these read LVVGNTEI and SIGGN. Residues Cys538 and Cys995 are joined by a disulfide bond. Positions 770 and 801 each coordinate Mo-molybdopterin. Substrate is bound by residues Glu805 and Arg883. Arg915 serves as a coordination point for Mo-molybdopterin. Residues Phe917 and Thr1013 each coordinate substrate. Residue Ala1082 coordinates Mo-molybdopterin. Glu1264 serves as the catalytic Proton acceptor.

It belongs to the xanthine dehydrogenase family. Homodimer. Interacts with BTN1A1. FAD serves as cofactor. The cofactor is Mo-molybdopterin. Requires [2Fe-2S] cluster as cofactor. In terms of processing, subject to partial proteolysis; this alters the enzyme from the dehydrogenase form (D) to the oxidase form (O). Contains sulfhydryl groups that are easily oxidized (in vitro); this alters the enzyme from the dehydrogenase form (D) to the oxidase form (O).

The protein resides in the cytoplasm. The protein localises to the peroxisome. It is found in the secreted. It carries out the reaction xanthine + NAD(+) + H2O = urate + NADH + H(+). The enzyme catalyses hypoxanthine + NAD(+) + H2O = xanthine + NADH + H(+). It catalyses the reaction xanthine + O2 + H2O = urate + H2O2. Its activity is regulated as follows. Can be converted from the dehydrogenase form (D) to the oxidase form (O) irreversibly by proteolysis or reversibly through the oxidation of sulfhydryl groups. Key enzyme in purine degradation. Catalyzes the oxidation of hypoxanthine to xanthine. Catalyzes the oxidation of xanthine to uric acid. Contributes to the generation of reactive oxygen species. The protein is Xanthine dehydrogenase/oxidase (Xdh) of Mus musculus (Mouse).